The sequence spans 210 residues: Protein GrpE (210 aa).

The segment at 1–31 (MAKDPQTPTDEELARAERDAEPQPGDATDDE) is disordered. Over residues 12 to 21 (ELARAERDAE) the composition is skewed to basic and acidic residues.

The protein belongs to the GrpE family. As to quaternary structure, homodimer.

The protein localises to the cytoplasm. Functionally, participates actively in the response to hyperosmotic and heat shock by preventing the aggregation of stress-denatured proteins, in association with DnaK and GrpE. It is the nucleotide exchange factor for DnaK and may function as a thermosensor. Unfolded proteins bind initially to DnaJ; upon interaction with the DnaJ-bound protein, DnaK hydrolyzes its bound ATP, resulting in the formation of a stable complex. GrpE releases ADP from DnaK; ATP binding to DnaK triggers the release of the substrate protein, thus completing the reaction cycle. Several rounds of ATP-dependent interactions between DnaJ, DnaK and GrpE are required for fully efficient folding. In Chromohalobacter salexigens (strain ATCC BAA-138 / DSM 3043 / CIP 106854 / NCIMB 13768 / 1H11), this protein is Protein GrpE.